Here is a 351-residue protein sequence, read N- to C-terminus: Peptide chain release factor 1 (351 aa).

Q229 carries the post-translational modification N5-methylglutamine.

This sequence belongs to the prokaryotic/mitochondrial release factor family. Post-translationally, methylated by PrmC. Methylation increases the termination efficiency of RF1.

It is found in the cytoplasm. In terms of biological role, peptide chain release factor 1 directs the termination of translation in response to the peptide chain termination codons UAG and UAA. The sequence is that of Peptide chain release factor 1 from Ruegeria pomeroyi (strain ATCC 700808 / DSM 15171 / DSS-3) (Silicibacter pomeroyi).